We begin with the raw amino-acid sequence, 461 residues long: Protein transport protein HofB homolog (461 aa).

222–229 is a binding site for ATP; it reads GPTGSGKT.

It belongs to the GSP E family.

In Escherichia coli (strain K12), this protein is Protein transport protein HofB homolog (hofB).